The primary structure comprises 1120 residues: Elongation factor-like GTPase 1 (1120 aa).

Residues 17-272 (ANIRNICVLA…LMKTLWGDYY (256 aa)) form the tr-type G domain. GTP-binding positions include 26–33 (AHVDHGKT), 92–96 (DSPGH), and 146–149 (NKID). A disordered region spans residues 430-496 (PRPLTQEEIA…VESMTPKPVL (67 aa)). Composition is skewed to basic and acidic residues over residues 438 to 452 (IAQR…HAEK) and 475 to 484 (PKGEEPRGDE). Lys-528 is subject to N6-acetyllysine. The segment at 907–930 (ASDLAKEGQEENETCSGGNENQEL) is disordered. A compositionally biased stretch (polar residues) spans 920–930 (TCSGGNENQEL).

It belongs to the TRAFAC class translation factor GTPase superfamily. Classic translation factor GTPase family. As to quaternary structure, associates with the 60S ribosomal subunit. Found in a complex consisting of the 60S ribosomal subunit, SBDS and EFL1. Interacts with SBDS and binds to GTP and GDP; the interaction with SBDS decreases EFL1 affinity for GDP and facilitates GDP release. In terms of tissue distribution, expressed at low levels in brain. Expression is highly increased in glioma tissues.

It catalyses the reaction GTP + H2O = GDP + phosphate + H(+). GTPase activity is stimulated in the presence of 60S ribosome subunits. GTPase involved in the biogenesis of the 60S ribosomal subunit and translational activation of ribosomes. Together with SBDS, triggers the GTP-dependent release of EIF6 from 60S pre-ribosomes in the cytoplasm, thereby activating ribosomes for translation competence by allowing 80S ribosome assembly and facilitating EIF6 recycling to the nucleus, where it is required for 60S rRNA processing and nuclear export. The chain is Elongation factor-like GTPase 1 from Homo sapiens (Human).